We begin with the raw amino-acid sequence, 426 residues long: Serine/threonine-protein kinase SRPK (426 aa).

A compositionally biased stretch (basic and acidic residues) spans 1–23 (MENIFKEKEKGKEKAKEEEKEND). Residues 1–40 (MENIFKEKEKGKEKAKEEEKENDSGDLFDSEDEGTEDYKK) form a disordered region. Over residues 24–35 (SGDLFDSEDEGT) the composition is skewed to acidic residues. One can recognise a Protein kinase domain in the interval 56–419 (YRIVKKLGWG…ARDSLEHPYM (364 aa)). Residues 62 to 70 (LGWGHFSTV) and Lys-86 contribute to the ATP site. Asp-188 functions as the Proton acceptor in the catalytic mechanism. The Nuclear localization signal motif lies at 318-328 (PKKGDKYDKTD).

Belongs to the protein kinase superfamily. CMGC Ser/Thr protein kinase family.

The protein localises to the nucleus. The catalysed reaction is L-seryl-[protein] + ATP = O-phospho-L-seryl-[protein] + ADP + H(+). It carries out the reaction L-threonyl-[protein] + ATP = O-phospho-L-threonyl-[protein] + ADP + H(+). Phosphorylates serine/arginine-rich protein PSR. The sequence is that of Serine/threonine-protein kinase SRPK from Physarum polycephalum (Slime mold).